A 286-amino-acid chain; its full sequence is Divergent deoxyribose-phosphate aldolase-like protein (286 aa).

Homodimer. Interacts with ADF; the interaction enhances ADF activity in disassembly of filamentous actin and inhibition of actin polymerization.

The protein localises to the cytoplasm. Functionally, involved in regulation of actin dynamics. This chain is Divergent deoxyribose-phosphate aldolase-like protein, found in Toxoplasma gondii.